The sequence spans 453 residues: tRNA-2-methylthio-N(6)-dimethylallyladenosine synthase (453 aa).

The 121-residue stretch at 11 to 131 folds into the MTTase N-terminal domain; that stretch reads KSFHVKSFGC…LPQLVADAAE (121 aa). [4Fe-4S] cluster is bound by residues Cys20, Cys56, Cys94, Cys167, Cys171, and Cys174. One can recognise a Radical SAM core domain in the interval 153–385; it reads RRQGPTAFLT…QALLNEQQHR (233 aa). Residues 388-449 form the TRAM domain; that stretch reads LATVGKRCEV…PNSLSGALVE (62 aa).

This sequence belongs to the methylthiotransferase family. MiaB subfamily. Monomer. [4Fe-4S] cluster is required as a cofactor.

It localises to the cytoplasm. The catalysed reaction is N(6)-dimethylallyladenosine(37) in tRNA + (sulfur carrier)-SH + AH2 + 2 S-adenosyl-L-methionine = 2-methylsulfanyl-N(6)-dimethylallyladenosine(37) in tRNA + (sulfur carrier)-H + 5'-deoxyadenosine + L-methionine + A + S-adenosyl-L-homocysteine + 2 H(+). Its function is as follows. Catalyzes the methylthiolation of N6-(dimethylallyl)adenosine (i(6)A), leading to the formation of 2-methylthio-N6-(dimethylallyl)adenosine (ms(2)i(6)A) at position 37 in tRNAs that read codons beginning with uridine. In Rhizorhabdus wittichii (strain DSM 6014 / CCUG 31198 / JCM 15750 / NBRC 105917 / EY 4224 / RW1) (Sphingomonas wittichii), this protein is tRNA-2-methylthio-N(6)-dimethylallyladenosine synthase.